We begin with the raw amino-acid sequence, 516 residues long: Importin subunit alpha-B (516 aa).

Residues 1–29 (MQRSKQETRKSQYKKSIDSDESRRKREEA) show a composition bias toward basic and acidic residues. Residues 1–54 (MQRSKQETRKSQYKKSIDSDESRRKREEASLSIRKNKREESLLKKRTQAVPGST) are disordered. Positions 1-55 (MQRSKQETRKSQYKKSIDSDESRRKREEASLSIRKNKREESLLKKRTQAVPGSTP) constitute an IBB domain. ARM repeat units lie at residues 55–96 (PVKV…KLLS), 100–140 (SPPI…NIAS), 143–182 (PEQT…NIAG), 185–227 (HYCR…NFCR), 229–268 (KPQP…YLSD), 271–310 (NERI…NIVT), 313–352 (DNQT…NITA), 355–394 (KNQI…NATS), and 398–437 (PQQI…NILV). The disordered stretch occupies residues 490–516 (EQEDEGDLMPEGSSFSFSNQTNSNFNL). Residues 502–516 (SSFSFSNQTNSNFNL) are compositionally biased toward low complexity.

Belongs to the importin alpha family. In terms of assembly, forms a complex with tnpo/importin subunit beta.

Its subcellular location is the cytoplasm. It localises to the nucleus envelope. Functions in nuclear protein import via a substrate-importin alpha-beta transport complex that passes though the nuclear pore complexes (NPC). Binds specifically and directly to substrates containing either a simple or bipartite NLS motif. This is Importin subunit alpha-B from Dictyostelium discoideum (Social amoeba).